Here is a 372-residue protein sequence, read N- to C-terminus: Glutamate 5-kinase (372 aa).

An ATP-binding site is contributed by K14. Residues S54, D141, and N153 each contribute to the substrate site. ATP contacts are provided by residues 173–174 (TD) and 215–221 (SGGMLTK). The PUA domain occupies 280–358 (AGKVVVDEGA…HEIEHILGYI (79 aa)).

Belongs to the glutamate 5-kinase family.

Its subcellular location is the cytoplasm. The catalysed reaction is L-glutamate + ATP = L-glutamyl 5-phosphate + ADP. It participates in amino-acid biosynthesis; L-proline biosynthesis; L-glutamate 5-semialdehyde from L-glutamate: step 1/2. Its function is as follows. Catalyzes the transfer of a phosphate group to glutamate to form L-glutamate 5-phosphate. The polypeptide is Glutamate 5-kinase (Methylobacillus flagellatus (strain ATCC 51484 / DSM 6875 / VKM B-1610 / KT)).